Reading from the N-terminus, the 115-residue chain is Yop proteins translocation protein M (115 aa).

The segment at 19–38 (HGGQAGRLTETNPLTENSHQ) is disordered. The span at 27–38 (TETNPLTENSHQ) shows a compositional bias: polar residues.

Belongs to an operon involved in the translocation of Yop proteins across the bacterial membranes or in the specific control of this function. This is Yop proteins translocation protein M (yscM) from Yersinia pestis.